The chain runs to 377 residues: Palmitoyltransferase PFA4 (377 aa).

Topologically, residues 1 to 9 (MAIKLKNRW) are cytoplasmic. The chain crosses the membrane as a helical span at residues 10–30 (LGVAIPAFLVALIGYGSHYFI). Residues 31–122 (LSNFLSWNEQ…NCVGHSNFPH (92 aa)) lie on the Lumenal side of the membrane. The DHHC domain occupies 78–128 (NYCKKCRVYKPERAHHCKTCNQCVLAMDHHCPWTLNCVGHSNFPHFMRFLF). Catalysis depends on Cys-108, which acts as the S-palmitoyl cysteine intermediate. The helical transmembrane segment at 123-143 (FMRFLFWVIFSTAYLLFLLIG) threads the bilayer. The Cytoplasmic segment spans residues 144–163 (RIYLLWSIRHTAFHHRSTSE). The chain crosses the membrane as a helical span at residues 164–184 (IIFICIMTPMDAFVLLTVSSL). Topologically, residues 185–377 (LGRCIYNQCL…SDFGVDTELE (193 aa)) are lumenal.

The protein belongs to the DHHC palmitoyltransferase family. PFA4 subfamily.

The protein localises to the endoplasmic reticulum membrane. The catalysed reaction is L-cysteinyl-[protein] + hexadecanoyl-CoA = S-hexadecanoyl-L-cysteinyl-[protein] + CoA. In terms of biological role, mediates the reversible addition of palmitate to target proteins, thereby regulating their membrane association and biological function. This is Palmitoyltransferase PFA4 from Kluyveromyces lactis (strain ATCC 8585 / CBS 2359 / DSM 70799 / NBRC 1267 / NRRL Y-1140 / WM37) (Yeast).